We begin with the raw amino-acid sequence, 312 residues long: tRNA dimethylallyltransferase (312 aa).

11–18 contributes to the ATP binding site; sequence GPTAVGKT. Residue 13–18 coordinates substrate; sequence TAVGKT. Residues 159 to 163 form an interaction with substrate tRNA region; sequence QRVLR.

Belongs to the IPP transferase family. Monomer. It depends on Mg(2+) as a cofactor.

It catalyses the reaction adenosine(37) in tRNA + dimethylallyl diphosphate = N(6)-dimethylallyladenosine(37) in tRNA + diphosphate. Its function is as follows. Catalyzes the transfer of a dimethylallyl group onto the adenine at position 37 in tRNAs that read codons beginning with uridine, leading to the formation of N6-(dimethylallyl)adenosine (i(6)A). The sequence is that of tRNA dimethylallyltransferase from Macrococcus caseolyticus (strain JCSC5402) (Macrococcoides caseolyticum).